Here is a 205-residue protein sequence, read N- to C-terminus: Outer-membrane lipoprotein LolB (205 aa).

An N-terminal signal peptide occupies residues 1 to 17; it reads MFLRHVIVFSLIALLTG. A lipid anchor (N-palmitoyl cysteine) is attached at cysteine 18. Cysteine 18 carries the S-diacylglycerol cysteine lipid modification.

Belongs to the LolB family. As to quaternary structure, monomer.

The protein localises to the cell outer membrane. In terms of biological role, plays a critical role in the incorporation of lipoproteins in the outer membrane after they are released by the LolA protein. The chain is Outer-membrane lipoprotein LolB from Pseudomonas savastanoi pv. phaseolicola (strain 1448A / Race 6) (Pseudomonas syringae pv. phaseolicola (strain 1448A / Race 6)).